Here is a 325-residue protein sequence, read N- to C-terminus: Tetraacyldisaccharide 4'-kinase (325 aa).

Position 55 to 62 (55 to 62) interacts with ATP; that stretch reads TAGGNGKT.

Belongs to the LpxK family.

It carries out the reaction a lipid A disaccharide + ATP = a lipid IVA + ADP + H(+). The protein operates within glycolipid biosynthesis; lipid IV(A) biosynthesis; lipid IV(A) from (3R)-3-hydroxytetradecanoyl-[acyl-carrier-protein] and UDP-N-acetyl-alpha-D-glucosamine: step 6/6. Transfers the gamma-phosphate of ATP to the 4'-position of a tetraacyldisaccharide 1-phosphate intermediate (termed DS-1-P) to form tetraacyldisaccharide 1,4'-bis-phosphate (lipid IVA). This Salmonella newport (strain SL254) protein is Tetraacyldisaccharide 4'-kinase.